The sequence spans 396 residues: Phosphoglycerate kinase (396 aa).

Residues 21–23 (DLN), arginine 36, 59–62 (HFGR), arginine 118, and arginine 151 each bind substrate. ATP-binding positions include lysine 201, glutamate 323, and 353 to 356 (GGDT).

This sequence belongs to the phosphoglycerate kinase family. Monomer.

It localises to the cytoplasm. It carries out the reaction (2R)-3-phosphoglycerate + ATP = (2R)-3-phospho-glyceroyl phosphate + ADP. Its pathway is carbohydrate degradation; glycolysis; pyruvate from D-glyceraldehyde 3-phosphate: step 2/5. The protein is Phosphoglycerate kinase of Brucella abortus biovar 1 (strain 9-941).